The chain runs to 229 residues: Large ribosomal subunit protein uL1 (229 aa).

This sequence belongs to the universal ribosomal protein uL1 family. As to quaternary structure, part of the 50S ribosomal subunit.

In terms of biological role, binds directly to 23S rRNA. The L1 stalk is quite mobile in the ribosome, and is involved in E site tRNA release. Its function is as follows. Protein L1 is also a translational repressor protein, it controls the translation of the L11 operon by binding to its mRNA. The protein is Large ribosomal subunit protein uL1 of Chlorobium phaeobacteroides (strain DSM 266 / SMG 266 / 2430).